The chain runs to 718 residues: Exostosin-2 (718 aa).

At 1–25 (MCASVKYNIRGPALIPRMKTKHRIY) the chain is on the cytoplasmic side. Residues 26 to 46 (YITLFSIVLLGLIATGMFQFW) form a helical; Signal-anchor for type II membrane protein membrane-spanning segment. Residues 47-718 (PHSIESSGDW…LKSFPNIGSL (672 aa)) lie on the Lumenal side of the membrane. Cystine bridges form between cysteine 85-cysteine 90, cysteine 96-cysteine 151, cysteine 286-cysteine 300, and cysteine 318-cysteine 339. Asparagine 288 carries N-linked (GlcNAc...) asparagine glycosylation. Residues leucine 461, arginine 465, asparagine 490, and asparagine 517 each coordinate UDP. 7 residues coordinate UDP-N-acetyl-alpha-D-glucosamine: arginine 465, asparagine 490, asparagine 517, arginine 522, aspartate 538, aspartate 539, and aspartate 540. 2 residues coordinate UDP: aspartate 538 and aspartate 539. Aspartate 540 is a Mn(2+) binding site. The a protein site is built by tyrosine 582 and serine 584. Cysteines 626 and 676 form a disulfide. UDP-N-acetyl-alpha-D-glucosamine-binding residues include glutamate 627 and aspartate 628. An N-linked (GlcNAc...) asparagine glycan is attached at asparagine 637. Residues lysine 651 and lysine 653 each coordinate a protein. A UDP-N-acetyl-alpha-D-glucosamine-binding site is contributed by arginine 673.

This sequence belongs to the glycosyltransferase 47 family. In terms of assembly, part of the heparan sulfate polymerase, a dimeric complex composed of EXT1 and EXT2. Could also form homooligomeric complexes. Interacts with NDST1. Interacts with GALNT5. Mn(2+) serves as cofactor. Post-translationally, a soluble form is generated by proteolytic processing. N-glycosylated at Asn-637.

The protein resides in the golgi apparatus membrane. It is found in the golgi apparatus. The protein localises to the cis-Golgi network membrane. It localises to the endoplasmic reticulum membrane. Its subcellular location is the secreted. The enzyme catalyses 3-O-{[(1-&gt;4)-beta-D-GlcA-(1-&gt;4)-alpha-D-GlcNAc](n)-(1-&gt;4)-beta-D-GlcA-(1-&gt;3)-beta-D-Gal-(1-&gt;3)-beta-D-Gal-(1-&gt;4)-beta-D-Xyl}-L-seryl-[protein] + UDP-N-acetyl-alpha-D-glucosamine = 3-O-{alpha-D-GlcNAc-[(1-&gt;4)-beta-D-GlcA-(1-&gt;4)-alpha-D-GlcNAc](n)-(1-&gt;4)-beta-D-GlcA-(1-&gt;3)-beta-D-Gal-(1-&gt;3)-beta-D-Gal-(1-&gt;4)-beta-D-Xyl}-L-seryl-[protein] + UDP + H(+). Its pathway is protein modification; protein glycosylation. In terms of biological role, glycosyltransferase forming with EXT1 the heterodimeric heparan sulfate polymerase which catalyzes the elongation of the heparan sulfate glycan backbone. Glycan backbone extension consists in the alternating transfer of (1-&gt;4)-beta-D-GlcA and (1-&gt;4)-alpha-D-GlcNAc residues from their respective UDP-sugar donors. Both EXT1 and EXT2 are required for the full activity of the polymerase since EXT1 bears the N-acetylglucosaminyl-proteoglycan 4-beta-glucuronosyltransferase activity within the complex while EXT2 carries the glucuronosyl-N-acetylglucosaminyl-proteoglycan 4-alpha-N-acetylglucosaminyltransferase activity. Heparan sulfate proteoglycans are ubiquitous components of the extracellular matrix and play an important role in tissue homeostasis and signaling. This is Exostosin-2 from Bos taurus (Bovine).